The chain runs to 431 residues: Glutamate-1-semialdehyde 2,1-aminomutase (431 aa).

Lysine 269 carries the N6-(pyridoxal phosphate)lysine modification.

This sequence belongs to the class-III pyridoxal-phosphate-dependent aminotransferase family. HemL subfamily. As to quaternary structure, homodimer. It depends on pyridoxal 5'-phosphate as a cofactor.

The protein localises to the cytoplasm. It carries out the reaction (S)-4-amino-5-oxopentanoate = 5-aminolevulinate. Its pathway is porphyrin-containing compound metabolism; protoporphyrin-IX biosynthesis; 5-aminolevulinate from L-glutamyl-tRNA(Glu): step 2/2. The protein operates within porphyrin-containing compound metabolism; chlorophyll biosynthesis. In Chlorobaculum tepidum (strain ATCC 49652 / DSM 12025 / NBRC 103806 / TLS) (Chlorobium tepidum), this protein is Glutamate-1-semialdehyde 2,1-aminomutase.